Consider the following 387-residue polypeptide: 3-ketoacyl-CoA thiolase (387 aa).

Cys91 functions as the Acyl-thioester intermediate in the catalytic mechanism. Active-site proton acceptor residues include His343 and Cys373.

It belongs to the thiolase-like superfamily. Thiolase family. Heterotetramer of two alpha chains (FadB) and two beta chains (FadA).

Its subcellular location is the cytoplasm. The catalysed reaction is an acyl-CoA + acetyl-CoA = a 3-oxoacyl-CoA + CoA. The protein operates within lipid metabolism; fatty acid beta-oxidation. Functionally, catalyzes the final step of fatty acid oxidation in which acetyl-CoA is released and the CoA ester of a fatty acid two carbons shorter is formed. The chain is 3-ketoacyl-CoA thiolase from Aeromonas hydrophila subsp. hydrophila (strain ATCC 7966 / DSM 30187 / BCRC 13018 / CCUG 14551 / JCM 1027 / KCTC 2358 / NCIMB 9240 / NCTC 8049).